Consider the following 73-residue polypeptide: Acyl carrier protein homolog (73 aa).

Residues Met1 to Ser72 form the Carrier domain. An O-(pantetheine 4'-phosphoryl)serine modification is found at Ser32.

In terms of processing, 4'-phosphopantetheine is transferred from CoA to a specific serine of the apo-ACP-like protein.

The protein operates within lipid metabolism; fatty acid biosynthesis. Carrier of the growing fatty acid chain in fatty acid biosynthesis. In Mycoplasmopsis pulmonis (strain UAB CTIP) (Mycoplasma pulmonis), this protein is Acyl carrier protein homolog.